A 501-amino-acid chain; its full sequence is Aminoaldehyde dehydrogenase ALDH10A8, chloroplastic (501 aa).

Residues Asp99 and Leu189 each coordinate Na(+). NAD(+) contacts are provided by residues 238 to 243 (GSFATG) and 238 to 245 (GSFATGSK). Glu260 serves as the catalytic Proton acceptor. NAD(+) is bound by residues Cys294 and Glu393. Cys294 serves as the catalytic Nucleophile.

It belongs to the aldehyde dehydrogenase family. In terms of assembly, homodimer. Widely expressed.

It is found in the cytoplasm. The protein localises to the plastid. It localises to the chloroplast. The catalysed reaction is 4-aminobutanal + NAD(+) + H2O = 4-aminobutanoate + NADH + 2 H(+). It carries out the reaction 3-aminopropanal + NAD(+) + H2O = beta-alanine + NADH + 2 H(+). It catalyses the reaction 4-(trimethylamino)butanal + NAD(+) + H2O = 4-(trimethylamino)butanoate + NADH + 2 H(+). The enzyme catalyses 4-guanidinobutanal + NAD(+) + H2O = 4-guanidinobutanoate + NADH + 2 H(+). The catalysed reaction is betaine aldehyde + NAD(+) + H2O = glycine betaine + NADH + 2 H(+). It functions in the pathway amine and polyamine biosynthesis; betaine biosynthesis via choline pathway; betaine from betaine aldehyde: step 1/1. Its function is as follows. Dehydrogenase that catalyzes the oxidation of several aminoaldehydes. Metabolizes and detoxifies aldehyde products of polyamine degradation to non-toxic amino acids. Catalyzes the oxidation of 4-aminobutanal and 3-aminopropanal to 4-aminobutanoate and beta-alanine, respectively. Production of 4-aminobutinoate by ALDH10A8 may confer tolerance to salt stress. Catalyzes the oxidation of 4-(trimethylamino)butanal and 4-guanidinobutanal to 4-trimethylammoniobutanoate and 4-guanidinobutanoate, respectively. Involved in glycine betaine biosynthesis. Catalyzes with low efficiency the oxidation of betaine aldehyde to glycine betaine. In Arabidopsis thaliana (Mouse-ear cress), this protein is Aminoaldehyde dehydrogenase ALDH10A8, chloroplastic.